The sequence spans 508 residues: Photosystem II CP47 reaction center protein (508 aa).

6 helical membrane-spanning segments follow: residues 21 to 36, 101 to 115, 140 to 156, 203 to 218, 237 to 252, and 457 to 472; these read SVHIMHTALVAGWAGS, IVFSGLCFLAAIWHW, GIHLFLSGVACFGFGAF, IAAGTLGILAGLFHLS, VLSSSIAAVFFAAFVV, and SFALLFFFGHIWHGSR.

This sequence belongs to the PsbB/PsbC family. PsbB subfamily. PSII is composed of 1 copy each of membrane proteins PsbA, PsbB, PsbC, PsbD, PsbE, PsbF, PsbH, PsbI, PsbJ, PsbK, PsbL, PsbM, PsbT, PsbX, PsbY, PsbZ, Psb30/Ycf12, at least 3 peripheral proteins of the oxygen-evolving complex and a large number of cofactors. It forms dimeric complexes. The cofactor is Binds multiple chlorophylls. PSII binds additional chlorophylls, carotenoids and specific lipids..

It localises to the plastid. The protein localises to the chloroplast thylakoid membrane. Its function is as follows. One of the components of the core complex of photosystem II (PSII). It binds chlorophyll and helps catalyze the primary light-induced photochemical processes of PSII. PSII is a light-driven water:plastoquinone oxidoreductase, using light energy to abstract electrons from H(2)O, generating O(2) and a proton gradient subsequently used for ATP formation. This Fagopyrum esculentum subsp. ancestrale (Wild buckwheat) protein is Photosystem II CP47 reaction center protein.